A 488-amino-acid chain; its full sequence is Envelope glycoprotein gp62 (488 aa).

The first 20 residues, 1–20 (MGKFLATLILFFQFCPLILG), serve as a signal peptide directing secretion. Topologically, residues 21–442 (DYSPSCCTLT…LGLSQWAREA (422 aa)) are extracellular. Asn140 and Asn222 each carry an N-linked (GlcNAc...) asparagine; by host glycan. The CXXC motif lies at 225-228 (CIVC). Cystine bridges form between Cys225-Cys228, Cys225-Cys401, and Cys393-Cys400. N-linked (GlcNAc...) asparagine; by host glycosylation is found at Asn244 and Asn272. The fusion peptide stretch occupies residues 313–333 (AVPVAVWLVSALAMGAGVAGR). 2 coiled-coil regions span residues 341–387 (ASGK…LLFW) and 397–429 (QEQC…GWGL). Residues 376 to 392 (AQNRRGLDLLFWEQGGL) form an immunosuppression region. The CX6CC signature appears at 393-401 (CKALQEQCC). N-linked (GlcNAc...) asparagine; by host glycosylation occurs at Asn404. Residues 443 to 463 (LQTGITLVALLLLVILAGPCI) form a helical membrane-spanning segment. Cys462 carries the S-palmitoyl cysteine; by host lipid modification. Residues 464 to 488 (LRQLRHLPSRVRYPHYSLINPESSL) lie on the Cytoplasmic side of the membrane.

In terms of assembly, the mature envelope protein (Env) consists of a trimer of SU-TM heterodimers attached by a labile interchain disulfide bond. In terms of processing, specific enzymatic cleavages in vivo yield mature proteins. Envelope glycoproteins are synthesized as an inactive precursor that is N-glycosylated and processed likely by host cell furin or by a furin-like protease in the Golgi to yield the mature SU and TM proteins. The cleavage site between SU and TM requires the minimal sequence [KR]-X-[KR]-R. The CXXC motif is highly conserved across a broad range of retroviral envelope proteins. It is thought to participate in the formation of a labile disulfide bond possibly with the CX6CC motif present in the transmembrane protein. Isomerization of the intersubunit disulfide bond to an SU intrachain disulfide bond is thought to occur upon receptor recognition in order to allow membrane fusion. Post-translationally, the transmembrane protein is palmitoylated.

It localises to the virion membrane. The protein resides in the host cell membrane. In terms of biological role, the surface protein (SU) attaches the virus to the host cell by binding to its receptor. This interaction triggers the refolding of the transmembrane protein (TM) and is thought to activate its fusogenic potential by unmasking its fusion peptide. Fusion occurs at the host cell plasma membrane. The transmembrane protein (TM) acts as a class I viral fusion protein. Under the current model, the protein has at least 3 conformational states: pre-fusion native state, pre-hairpin intermediate state, and post-fusion hairpin state. During viral and target cell membrane fusion, the coiled coil regions (heptad repeats) assume a trimer-of-hairpins structure, positioning the fusion peptide in close proximity to the C-terminal region of the ectodomain. The formation of this structure appears to drive apposition and subsequent fusion of viral and target cell membranes. Membranes fusion leads to delivery of the nucleocapsid into the cytoplasm. The polypeptide is Envelope glycoprotein gp62 (env) (Homo sapiens (Human)).